A 548-amino-acid polypeptide reads, in one-letter code: Fumarate hydratase class I, anaerobic (548 aa).

C105 is a binding site for [4Fe-4S] cluster. K192 is modified (N6-acetyllysine). [4Fe-4S] cluster contacts are provided by C224 and C318.

It belongs to the class-I fumarase family. Homodimer. Requires [4Fe-4S] cluster as cofactor.

The catalysed reaction is (S)-malate = fumarate + H2O. It catalyses the reaction (S,S)-tartrate = oxaloacetate + H2O. In terms of biological role, catalyzes the reversible hydration of fumarate to (S)-malate. Functions in the generation of fumarate for use as an anaerobic electron acceptor. To a lesser extent, also displays D-tartrate dehydratase activity, but is not able to convert (R)-malate, L-tartrate or meso-tartrate. Is required for anaerobic growth on D-tartrate. In Escherichia coli (strain K12), this protein is Fumarate hydratase class I, anaerobic.